The primary structure comprises 536 residues: Mannuronan C5-epimerase (536 aa).

An N-terminal signal peptide occupies residues 1–36; sequence MNSHASNGRSRNWPHALLESALLTSALLMASSVALA. 5 PbH1 repeats span residues 298–320, 322–345, 347–369, 371–393, and 394–416; these read TRDFVVKGNTYRDNIVYGIDPHD, SHGLIIAENDVYGTKKKHGIIISR, VDNSFIFRNKSHNNKLSGVVLDR, SVGNIVAYNEIYQNHTDGITLYE, and SGNNLLWGNRVIANRRHGIRVRN. The Proton acceptor role is filled by H319.

The protein belongs to the D-mannuronate C5-epimerase family.

Its subcellular location is the periplasm. It carries out the reaction [(1-&gt;4)-beta-D-mannuronosyl](n) = [alginate](n). It functions in the pathway glycan biosynthesis; alginate biosynthesis. Its function is as follows. Catalyzes the epimerization of beta-D-mannuronate to alpha-L-guluronate during the synthesis of the linear polysaccharide alginate. In addition, is part of a periplasmic protein complex that protects alginate from degradation by AlgL by channeling the newly formed alginate polymer through a scaffold that transfers the alginate polymer through the periplasmic space to the outer membrane secretin AlgE. The polypeptide is Mannuronan C5-epimerase (algG) (Pseudomonas syringae pv. tomato (strain ATCC BAA-871 / DC3000)).